The primary structure comprises 372 residues: BTB/POZ and TAZ domain-containing protein 4 (372 aa).

The segment at 14–37 (SADSSSVPIPPPLPSKSDGLKKKL) is disordered. Positions 60–128 (ADVVIYTDNG…LYSSCYEKEE (69 aa)) constitute a BTB domain. A TAZ-type zinc finger spans residues 238-330 (RIYSQLYEAM…SDQCRVPLCR (93 aa)). The interval 341-364 (KKDESRWKLLVKNVLGSKKIGGSP) is caM-binding.

Interacts with GTE11/BET10 through the BTB domain. As to expression, preferentially expressed in leaves, stems and flowers.

The protein localises to the cytoplasm. Its pathway is protein modification; protein ubiquitination. Its function is as follows. May act as a substrate-specific adapter of an E3 ubiquitin-protein ligase complex (CUL3-RBX1-BTB) which mediates the ubiquitination and subsequent proteasomal degradation of target proteins. The chain is BTB/POZ and TAZ domain-containing protein 4 (BT4) from Arabidopsis thaliana (Mouse-ear cress).